Here is a 354-residue protein sequence, read N- to C-terminus: Putative cinnamyl alcohol dehydrogenase 4 (354 aa).

Residues Cys-47, His-69, Glu-70, Cys-100, Cys-103, Cys-106, Cys-114, and Cys-163 each coordinate Zn(2+). NADP(+) contacts are provided by residues Thr-167, 188 to 193, 211 to 216, Thr-251, and 297 to 299; these read GLGGLG, STSESK, and SVT.

It belongs to the zinc-containing alcohol dehydrogenase family. In terms of assembly, homodimer. The cofactor is Zn(2+).

It carries out the reaction (E)-cinnamyl alcohol + NADP(+) = (E)-cinnamaldehyde + NADPH + H(+). The enzyme catalyses (E)-coniferol + NADP(+) = (E)-coniferaldehyde + NADPH + H(+). It catalyses the reaction (E)-sinapyl alcohol + NADP(+) = (E)-sinapaldehyde + NADPH + H(+). The catalysed reaction is (E)-4-coumaroyl alcohol + NADP(+) = (E)-4-coumaraldehyde + NADPH + H(+). It carries out the reaction (E)-caffeyl alcohol + NADP(+) = (E)-caffeyl aldehyde + NADPH + H(+). Its pathway is aromatic compound metabolism; phenylpropanoid biosynthesis. In terms of biological role, involved in lignin biosynthesis. Catalyzes the final step specific for the production of lignin monomers. Catalyzes the NADPH-dependent reduction of coniferaldehyde, 5-hydroxyconiferaldehyde, sinapaldehyde, 4-coumaraldehyde and caffeyl aldehyde to their respective alcohols. The polypeptide is Putative cinnamyl alcohol dehydrogenase 4 (Oryza sativa subsp. japonica (Rice)).